We begin with the raw amino-acid sequence, 244 residues long: uncharacterized protein (244 aa).

A signal peptide spans 1 to 17; that stretch reads MVLHVITALLSIGLCYG.

In terms of tissue distribution, component of the acid-soluble and acid-insoluble organic matrix of prismatic shell layers (at protein level).

It localises to the secreted. This is an uncharacterized protein from Haliotis asinina (Donkey's ear abalone).